The chain runs to 138 residues: ATP synthase epsilon chain, chloroplastic (138 aa).

The protein belongs to the ATPase epsilon chain family. As to quaternary structure, F-type ATPases have 2 components, CF(1) - the catalytic core - and CF(0) - the membrane proton channel. CF(1) has five subunits: alpha(3), beta(3), gamma(1), delta(1), epsilon(1). CF(0) has three main subunits: a, b and c.

The protein localises to the plastid. The protein resides in the chloroplast thylakoid membrane. Functionally, produces ATP from ADP in the presence of a proton gradient across the membrane. This chain is ATP synthase epsilon chain, chloroplastic, found in Staurastrum punctulatum (Green alga).